The primary structure comprises 58 residues: Ribosome modulation factor (58 aa).

Residues 1 to 14 (MKRQKRDKLTRAHS) show a composition bias toward basic residues. The tract at residues 1 to 25 (MKRQKRDKLTRAHSKGYQAGISGRS) is disordered.

Belongs to the ribosome modulation factor family.

The protein resides in the cytoplasm. Its function is as follows. During stationary phase, converts 70S ribosomes to an inactive dimeric form (100S ribosomes). This chain is Ribosome modulation factor, found in Alteromonas naphthalenivorans.